Here is a 430-residue protein sequence, read N- to C-terminus: UDP-N-acetylglucosamine 1-carboxyvinyltransferase (430 aa).

Residue 22–23 (KN) participates in phosphoenolpyruvate binding. Position 102 (R102) interacts with UDP-N-acetyl-alpha-D-glucosamine. The Proton donor role is filled by C126. C126 bears the 2-(S-cysteinyl)pyruvic acid O-phosphothioketal mark. UDP-N-acetyl-alpha-D-glucosamine is bound by residues 131-135 (RPVDL), 172-175 (KVSV), D317, and I339.

Belongs to the EPSP synthase family. MurA subfamily.

It is found in the cytoplasm. The catalysed reaction is phosphoenolpyruvate + UDP-N-acetyl-alpha-D-glucosamine = UDP-N-acetyl-3-O-(1-carboxyvinyl)-alpha-D-glucosamine + phosphate. It functions in the pathway cell wall biogenesis; peptidoglycan biosynthesis. Cell wall formation. Adds enolpyruvyl to UDP-N-acetylglucosamine. In Agrobacterium fabrum (strain C58 / ATCC 33970) (Agrobacterium tumefaciens (strain C58)), this protein is UDP-N-acetylglucosamine 1-carboxyvinyltransferase.